Consider the following 118-residue polypeptide: Late cornified envelope protein 1C (118 aa).

The span at 1–10 (MSCQQSQQQC) shows a compositional bias: low complexity. 2 disordered regions span residues 1 to 23 (MSCQQSQQQCQPPPKCTPKCPPK) and 87 to 118 (CHRPQSSGCCSQPSGGSSCCGGGSGQHSGGCC). Residues 11 to 23 (QPPPKCTPKCPPK) are compositionally biased toward pro residues. The segment covering 90-103 (PQSSGCCSQPSGGS) has biased composition (low complexity). Over residues 104 to 118 (SCCGGGSGQHSGGCC) the composition is skewed to gly residues.

Belongs to the LCE family. As to quaternary structure, interacts with CYSRT1. In terms of tissue distribution, skin-specific. Expression was readily detected in adult trunk skin, adult arm skin, fetal skin, penal skin, vulva, esophagus and tongue. Not expressed in the cervix, rectum, lung, colon, or placenta.

In terms of biological role, precursors of the cornified envelope of the stratum corneum. This chain is Late cornified envelope protein 1C (LCE1C), found in Homo sapiens (Human).